Reading from the N-terminus, the 730-residue chain is Ribosomal RNA large subunit methyltransferase K/L (730 aa).

One can recognise a THUMP domain in the interval 46–157 (TAYRLCVWSR…RGEAILSLDL (112 aa)). The segment at 395–418 (ERREAQPEGTEVRQQAPQASEPAR) is disordered.

This sequence belongs to the methyltransferase superfamily. RlmKL family.

Its subcellular location is the cytoplasm. The enzyme catalyses guanosine(2445) in 23S rRNA + S-adenosyl-L-methionine = N(2)-methylguanosine(2445) in 23S rRNA + S-adenosyl-L-homocysteine + H(+). It catalyses the reaction guanosine(2069) in 23S rRNA + S-adenosyl-L-methionine = N(2)-methylguanosine(2069) in 23S rRNA + S-adenosyl-L-homocysteine + H(+). Its function is as follows. Specifically methylates the guanine in position 2445 (m2G2445) and the guanine in position 2069 (m7G2069) of 23S rRNA. This is Ribosomal RNA large subunit methyltransferase K/L from Pseudomonas putida (strain GB-1).